Consider the following 496-residue polypeptide: Stomatal closure-related actin-binding protein 1 (496 aa).

Positions 126-269 form a coiled coil; sequence RNKDDVEEAI…FLQLQKKLAM (144 aa).

The protein belongs to the SCAB family. As to quaternary structure, dimer. Dimerization is required for actin-binding activity. As to expression, expressed in roots, stems, leaves, flowers, siliques and guard cells.

Its subcellular location is the cytoplasm. The protein resides in the cytoskeleton. Plant-specific actin binding protein that bundles and stabilizes microfilaments (MFs). Has no nucleation or capping activity. Regulates MF reorganization during stomatal closure. The binding to F-actin is insensitive to Ca(2+) and pH. Binds weakly to inositol phosphates. This Arabidopsis thaliana (Mouse-ear cress) protein is Stomatal closure-related actin-binding protein 1.